Consider the following 170-residue polypeptide: Tubulin polymerization-promoting protein family member 2 (170 aa).

The segment at 127–170 (TGTHKERFDESGKGKGIAGREEMTDNTGYVSGYKGSGTYDKKTK) is disordered. Basic and acidic residues predominate over residues 129-149 (THKERFDESGKGKGIAGREEM).

It belongs to the TPPP family. Expressed in spermatids. Detected in liver cancer (at protein level).

Its subcellular location is the cytoplasm. It localises to the cytosol. It is found in the cell projection. The protein localises to the cilium. The protein resides in the flagellum. In terms of biological role, probable regulator of microtubule dynamics required for sperm motility. In contrast to other members of the family, has no microtubule bundling activity. This chain is Tubulin polymerization-promoting protein family member 2, found in Homo sapiens (Human).